A 255-amino-acid polypeptide reads, in one-letter code: Phosphatidylglycerol--prolipoprotein diacylglyceryl transferase (255 aa).

3 helical membrane-spanning segments follow: residues 15–35 (WYGI…NLNC), 46–66 (IDVF…YYVV), and 84–104 (LGGL…YIVS). Arg130 serves as a coordination point for a 1,2-diacyl-sn-glycero-3-phospho-(1'-sn-glycerol). The next 3 helical transmembrane spans lie at 169–189 (PTFL…VYIF), 196–216 (GTVI…IEGL), and 228–248 (VAQL…VYLK).

Belongs to the Lgt family.

The protein localises to the cell membrane. It carries out the reaction L-cysteinyl-[prolipoprotein] + a 1,2-diacyl-sn-glycero-3-phospho-(1'-sn-glycerol) = an S-1,2-diacyl-sn-glyceryl-L-cysteinyl-[prolipoprotein] + sn-glycerol 1-phosphate + H(+). Its pathway is protein modification; lipoprotein biosynthesis (diacylglyceryl transfer). Catalyzes the transfer of the diacylglyceryl group from phosphatidylglycerol to the sulfhydryl group of the N-terminal cysteine of a prolipoprotein, the first step in the formation of mature lipoproteins. The sequence is that of Phosphatidylglycerol--prolipoprotein diacylglyceryl transferase from Clostridium kluyveri (strain NBRC 12016).